The primary structure comprises 358 residues: Beta-lactamase (358 aa).

Ser60 functions as the Acyl-ester intermediate in the catalytic mechanism. Tyr146 functions as the Proton acceptor in the catalytic mechanism. 311–313 serves as a coordination point for substrate; that stretch reads KTG.

This sequence belongs to the class-C beta-lactamase family.

The protein resides in the periplasm. It carries out the reaction a beta-lactam + H2O = a substituted beta-amino acid. This protein is a serine beta-lactamase with a substrate specificity for cephalosporins. This is Beta-lactamase from Pseudomonas fluorescens.